The chain runs to 452 residues: Probable ECA polymerase (452 aa).

Helical transmembrane passes span 6-26, 37-57, 63-83, 118-138, 155-175, 181-201, 207-227, 228-248, 341-361, 378-398, and 410-430; these read FSGL…LTWF, VFFS…TSVL, VGVA…CFYG, VILM…NGFL, GVAL…VYFL, AWLF…MIVG, IIIA…ISLW, MLAA…LKRY, LVVM…GLII, YKAA…IVLA, and VFFL…FWLF.

It belongs to the WzyE family. Probably part of a complex composed of WzxE, WzyE and WzzE.

Its subcellular location is the cell inner membrane. The protein operates within bacterial outer membrane biogenesis; enterobacterial common antigen biosynthesis. Functionally, probably involved in the polymerization of enterobacterial common antigen (ECA) trisaccharide repeat units. The protein is Probable ECA polymerase of Salmonella arizonae (strain ATCC BAA-731 / CDC346-86 / RSK2980).